The primary structure comprises 467 residues: Chlorophenol O-methyltransferase (467 aa).

A disordered region spans residues 1-41 (MAELRAPSSLSTERNGSASNTDVDKQKLNHLYQNGNKKTGS). Polar residues-rich tracts occupy residues 8–21 (SSLSTERNGSASNT) and 31–41 (LYQNGNKKTGS). Residue D320 participates in S-adenosyl-L-methionine binding. H368 acts as the Proton acceptor in catalysis.

The protein belongs to the class I-like SAM-binding methyltransferase superfamily. Cation-independent O-methyltransferase family.

The catalysed reaction is 2,4,6-trichlorophenol + S-adenosyl-L-methionine = 2,4,6-trichloroanisole + S-adenosyl-L-homocysteine. Its activity is regulated as follows. S-adenosyl-L-homocysteine acts as a competitive inhibitor. Also strongly inhibited by low concentrations of several metal ions, such as Cu(2+), Hg(2+), Zn(2+), and Ag(+), and to a lesser extent by p-chloromercuribenzoic acid, but it is not significantly affected by several thiols or other thiol reagents. Chlorophenol O-methyltransferase that methylates chlorophenols into chloroanisoles which are thought to be responsible for cork taint of wines. The only single chlorophenol (CP) methylated is 2-CP; neither 3-CP nor 4-CP are effective substrates. Within the dichlorophenols (DCPs), 2,4-DCP supports the highest rate of O-methylation, and the activity decreases in the following order: 2,3-DCP, 2,5-DCP, 2,6-DCP, and 3,4-DCP. Within the trichlorophenol (TCP) group, the maximal activity is observed with 2,3,4-TCP, whereas there is increasingly reduced activity with 2,4,5-TCP, 2,4,6-TCP, and 2,3,6-TCP. The only tetrachlorophenol (TeCP) that is methylated is 2,3,4,5-TeCP, since no activity can be detected with 2,3,4,6-TeCP and 2,3,5,6-TeCP. Is also able to methylate other halogenated phenols containing fluoro or bromo substituents, whereas other hydroxylated compounds, such as hydroxylated benzoic acids, hydroxybenzaldehydes, phenol, 2-metoxyphenol, and dihydroxybenzene, were not methylated. In Trichoderma longibrachiatum, this protein is Chlorophenol O-methyltransferase.